The following is a 675-amino-acid chain: Putative acyl-coenzyme A oxidase 3.2, peroxisomal (675 aa).

A peroxisome-targeting transit peptide spans methionine 1 to cysteine 34. Alanine 442–leucine 457 contacts FAD.

It belongs to the acyl-CoA oxidase family. FAD is required as a cofactor.

The protein resides in the peroxisome. It catalyses the reaction a 2,3-saturated acyl-CoA + O2 = a (2E)-enoyl-CoA + H2O2. Its function is as follows. Catalyzes the desaturation of acyl-CoAs to 2-trans-enoyl-CoAs. The polypeptide is Putative acyl-coenzyme A oxidase 3.2, peroxisomal (ACX3.2) (Arabidopsis thaliana (Mouse-ear cress)).